The primary structure comprises 237 residues: ATP synthase subunit a (237 aa).

5 helical membrane passes run 18-38, 77-97, 114-134, 167-187, and 208-230; these read LTLLAMSLLAVLLVFAFVYWA, SLFLFSLFLFLVVANNLGLMA, NIAFDLSMSFLITLICHVEGI, LALRIYGNIFAGEVLSGLLVT, and AFSVFISCVQAYVFTMLTSMYLG.

It belongs to the ATPase A chain family. F-type ATPases have 2 components, CF(1) - the catalytic core - and CF(0) - the membrane proton channel. CF(1) has five subunits: alpha(3), beta(3), gamma(1), delta(1), epsilon(1). CF(0) has three main subunits: a(1), b(2) and c(9-12). The alpha and beta chains form an alternating ring which encloses part of the gamma chain. CF(1) is attached to CF(0) by a central stalk formed by the gamma and epsilon chains, while a peripheral stalk is formed by the delta and b chains.

The protein localises to the cell membrane. In terms of biological role, key component of the proton channel; it plays a direct role in the translocation of protons across the membrane. This chain is ATP synthase subunit a, found in Streptococcus gordonii (strain Challis / ATCC 35105 / BCRC 15272 / CH1 / DL1 / V288).